We begin with the raw amino-acid sequence, 105 residues long: Large ribosomal subunit protein uL24 (105 aa).

This sequence belongs to the universal ribosomal protein uL24 family. As to quaternary structure, part of the 50S ribosomal subunit.

Its function is as follows. One of two assembly initiator proteins, it binds directly to the 5'-end of the 23S rRNA, where it nucleates assembly of the 50S subunit. In terms of biological role, one of the proteins that surrounds the polypeptide exit tunnel on the outside of the subunit. The sequence is that of Large ribosomal subunit protein uL24 from Marinomonas sp. (strain MWYL1).